The sequence spans 244 residues: ATP synthase subunit 4, mitochondrial (244 aa).

Residues 1 to 36 (MSSKLFCLRSFPSVQRTAWQRLVLPSTRKFSLTPTT) constitute a mitochondrion transit peptide.

It belongs to the eukaryotic ATPase B chain family. F-type ATPases have 2 components, CF(1) - the catalytic core - and CF(0) - the membrane proton channel. In yeast, the dimeric form of ATP synthase consists of 17 polypeptides: alpha, beta, gamma, delta, epsilon, 4 (B), 5 (OSCP), 6 (A), 8, 9 (C), d, E (Tim11), f, g, h, i/j and k.

The protein resides in the mitochondrion. The protein localises to the mitochondrion inner membrane. In terms of biological role, mitochondrial membrane ATP synthase (F(1)F(0) ATP synthase or Complex V) produces ATP from ADP in the presence of a proton gradient across the membrane which is generated by electron transport complexes of the respiratory chain. F-type ATPases consist of two structural domains, F(1) - containing the extramembraneous catalytic core, and F(0) - containing the membrane proton channel, linked together by a central stalk and a peripheral stalk. During catalysis, ATP synthesis in the catalytic domain of F(1) is coupled via a rotary mechanism of the central stalk subunits to proton translocation. Part of the complex F(0) domain and the peripheric stalk, which acts as a stator to hold the catalytic alpha(3)beta(3) subcomplex and subunit a/ATP6 static relative to the rotary elements. The polypeptide is ATP synthase subunit 4, mitochondrial (atp4) (Schizosaccharomyces pombe (strain 972 / ATCC 24843) (Fission yeast)).